A 372-amino-acid chain; its full sequence is NAD(P)H-quinone oxidoreductase subunit 1 (372 aa).

Helical transmembrane passes span isoleucine 27–valine 47, isoleucine 97–valine 117, valine 128–methionine 148, leucine 176–valine 196, isoleucine 204–leucine 224, isoleucine 266–valine 286, serine 308–leucine 328, and phenylalanine 347–proline 367.

This sequence belongs to the complex I subunit 1 family. In terms of assembly, NDH-1 is composed of at least 11 different subunits.

The protein localises to the cellular thylakoid membrane. The catalysed reaction is a plastoquinone + NADH + (n+1) H(+)(in) = a plastoquinol + NAD(+) + n H(+)(out). The enzyme catalyses a plastoquinone + NADPH + (n+1) H(+)(in) = a plastoquinol + NADP(+) + n H(+)(out). NDH-1 shuttles electrons from an unknown electron donor, via FMN and iron-sulfur (Fe-S) centers, to quinones in the respiratory and/or the photosynthetic chain. The immediate electron acceptor for the enzyme in this species is believed to be plastoquinone. Couples the redox reaction to proton translocation, and thus conserves the redox energy in a proton gradient. In Prochlorococcus marinus (strain MIT 9515), this protein is NAD(P)H-quinone oxidoreductase subunit 1.